A 950-amino-acid chain; its full sequence is Serine/threonine-protein kinase atg1 (950 aa).

In terms of domain architecture, Protein kinase spans 6-311; the sequence is YTRLDEIGRG…FPDFFENGVI (306 aa). ATP is bound by residues 12–20 and Lys-35; that span reads IGRGSFATV. Asp-149 serves as the catalytic Proton acceptor. 5 disordered regions span residues 314-425, 443-467, 505-570, 671-690, and 926-950; these read PIPG…HATA, RQRGRNTFSEGSPQTDRQADKLREE, QGGI…QSPT, VQTDPSSKGNLAGERENPDS, and PTPSANVPSKMAPLNPVSVGATPPK. Polar residues-rich tracts occupy residues 370–389, 447–458, and 511–520; these read GLTQRPPSQNQRFGTPPTTT, RNTFSEGSPQTD, and GAQTGALSRR. Residues 549–565 show a composition bias toward basic and acidic residues; that stretch reads SRADSMHNRQSSYERRY.

The protein belongs to the protein kinase superfamily. Ser/Thr protein kinase family. APG1/unc-51/ULK1 subfamily. Homodimer. Forms a ternary complex with ATG13 and ATG17.

It localises to the cytoplasm. It is found in the preautophagosomal structure membrane. It carries out the reaction L-seryl-[protein] + ATP = O-phospho-L-seryl-[protein] + ADP + H(+). The enzyme catalyses L-threonyl-[protein] + ATP = O-phospho-L-threonyl-[protein] + ADP + H(+). Its function is as follows. Serine/threonine protein kinase involved in the cytoplasm to vacuole transport (Cvt) and found to be essential in autophagy, where it is required for the formation of autophagosomes. Involved in the clearance of protein aggregates which cannot be efficiently cleared by the proteasome. Required for selective autophagic degradation of the nucleus (nucleophagy) as well as for mitophagy which contributes to regulate mitochondrial quantity and quality by eliminating the mitochondria to a basal level to fulfill cellular energy requirements and preventing excess ROS production. Also involved in endoplasmic reticulum-specific autophagic process, in selective removal of ER-associated degradation (ERAD) substrates. Plays a key role in ATG9 and ATG23 cycling through the pre-autophagosomal structure and is necessary to promote ATG18 binding to ATG9 through phosphorylation of ATG9. Catalyzes phosphorylation of ATG4, decreasing the interaction between ATG4 and ATG8 and impairing deconjugation of PE-conjugated forms of ATG8. The chain is Serine/threonine-protein kinase atg1 from Neosartorya fischeri (strain ATCC 1020 / DSM 3700 / CBS 544.65 / FGSC A1164 / JCM 1740 / NRRL 181 / WB 181) (Aspergillus fischerianus).